A 1792-amino-acid chain; its full sequence is Protein TIC 214 (1792 aa).

Transmembrane regions (helical) follow at residues I18 to G38, F64 to L84, P87 to H107, I129 to L149, I165 to I185, and I221 to F241.

It belongs to the TIC214 family. Part of the Tic complex.

It localises to the plastid. The protein resides in the chloroplast inner membrane. Functionally, involved in protein precursor import into chloroplasts. May be part of an intermediate translocation complex acting as a protein-conducting channel at the inner envelope. This Glycine max (Soybean) protein is Protein TIC 214.